Reading from the N-terminus, the 457-residue chain is Probable cytosolic Fe-S cluster assembly factor oxy-4 (457 aa).

Cys25 serves as a coordination point for [4Fe-4S] cluster. Residues 38–59 form a disordered region; the sequence is KEESQVNIRTKKPKDKESSKTE. [4Fe-4S] cluster is bound by residues Cys71, Cys74, Cys77, Cys176, Cys232, Cys380, and Cys384.

It belongs to the NARF family.

Its function is as follows. Component of the cytosolic iron-sulfur (Fe/S) protein assembly machinery. Required for maturation of extramitochondrial Fe/S proteins. This Caenorhabditis elegans protein is Probable cytosolic Fe-S cluster assembly factor oxy-4 (oxy-4).